Reading from the N-terminus, the 178-residue chain is Transcriptional repressor NrdR (178 aa).

A disordered region spans residues 1-21; that stretch reads MRCPFCGHEDTQVKDSRPHED. The segment at 3–34 is a zinc-finger region; sequence CPFCGHEDTQVKDSRPHEDGAAIRRRRICAAC. Basic and acidic residues predominate over residues 7–21; it reads GHEDTQVKDSRPHED. The region spanning 49 to 139 is the ATP-cone domain; it reads LYVVKADDRR…VHWDFRETKD (91 aa).

The protein belongs to the NrdR family. Zn(2+) is required as a cofactor.

Its function is as follows. Negatively regulates transcription of bacterial ribonucleotide reductase nrd genes and operons by binding to NrdR-boxes. This Gluconacetobacter diazotrophicus (strain ATCC 49037 / DSM 5601 / CCUG 37298 / CIP 103539 / LMG 7603 / PAl5) protein is Transcriptional repressor NrdR.